The sequence spans 216 residues: Pyrrolidone-carboxylate peptidase (216 aa).

Catalysis depends on residues Glu80, Cys143, and His168.

This sequence belongs to the peptidase C15 family. In terms of assembly, homotetramer.

It localises to the cytoplasm. It catalyses the reaction Release of an N-terminal pyroglutamyl group from a polypeptide, the second amino acid generally not being Pro.. In terms of biological role, removes 5-oxoproline from various penultimate amino acid residues except L-proline. The protein is Pyrrolidone-carboxylate peptidase of Cupriavidus necator (strain ATCC 17699 / DSM 428 / KCTC 22496 / NCIMB 10442 / H16 / Stanier 337) (Ralstonia eutropha).